A 430-amino-acid chain; its full sequence is Glutamate-1-semialdehyde 2,1-aminomutase 2 (430 aa).

An N6-(pyridoxal phosphate)lysine modification is found at Lys268.

The protein belongs to the class-III pyridoxal-phosphate-dependent aminotransferase family. HemL subfamily. Homodimer. Pyridoxal 5'-phosphate is required as a cofactor.

The protein localises to the cytoplasm. The catalysed reaction is (S)-4-amino-5-oxopentanoate = 5-aminolevulinate. It participates in porphyrin-containing compound metabolism; protoporphyrin-IX biosynthesis; 5-aminolevulinate from L-glutamyl-tRNA(Glu): step 2/2. The chain is Glutamate-1-semialdehyde 2,1-aminomutase 2 from Shouchella clausii (strain KSM-K16) (Alkalihalobacillus clausii).